Reading from the N-terminus, the 341-residue chain is MEPAFGEVNQLGGVFVNGRPLPNAIRLRIVELAQLGIRPCDISRQLRVSHGCVSKILARYNETGSILPGAIGGSKPRVTTPTVVKHIRTYKQRDPGIFAWEIRDRLLADGVCDKYNVPSVSSISRILRNKIGNLTQQGHYDSYKQHQPAPQPALPYNHIYSYPSPITAAAAKVPTPPGVPAIPGSVAMPRTWPSSHSVTDILGIRSITDQVSDSSPYHSPKVEEWSSLGRNNFPAAAPHAVNGLEKGALEQETKYSQAPNGLPAVGSFVSASSMAPYPTPAQVSPYMTYSAAPSGYVGGHGWQHAGSTPLSPHNCDIPASLAFKGMQAAREGSHSVTASAL.

Residues 4–130 (AFGEVNQLGG…SSISRILRNK (127 aa)) constitute a DNA-binding region (paired). A PAI subdomain region spans residues 7-63 (EVNQLGGVFVNGRPLPNAIRLRIVELAQLGIRPCDISRQLRVSHGCVSKILARYNET). The tract at residues 82–130 (TVVKHIRTYKQRDPGIFAWEIRDRLLADGVCDKYNVPSVSSISRILRNK) is RED subdomain. An interaction with KDM5B region spans residues 168–189 (AAAAKVPTPPGVPAIPGSVAMP).

In terms of assembly, interacts with KDM5B.

The protein localises to the nucleus. Functionally, transcription factor required for normal development of thymus, parathyroid glands, ultimobranchial bodies, teeth, skeletal elements of skull and larynx as well as distal limbs. The protein is Paired box protein Pax-9 (PAX9) of Callithrix jacchus (White-tufted-ear marmoset).